The sequence spans 757 residues: 5-methyltetrahydropteroyltriglutamate--homocysteine methyltransferase (757 aa).

5-methyltetrahydropteroyltri-L-glutamate is bound by residues 15 to 18 (RELK) and Lys114. L-homocysteine contacts are provided by residues 428–430 (IGS) and Glu481. Residues 428–430 (IGS) and Glu481 contribute to the L-methionine site. Residues 512–513 (RC) and Trp558 contribute to the 5-methyltetrahydropteroyltri-L-glutamate site. Asp596 is an L-homocysteine binding site. Asp596 is a binding site for L-methionine. Glu602 contributes to the 5-methyltetrahydropteroyltri-L-glutamate binding site. Positions 639, 641, and 663 each coordinate Zn(2+). The active-site Proton donor is the His692. Position 724 (Cys724) interacts with Zn(2+).

The protein belongs to the vitamin-B12 independent methionine synthase family. It depends on Zn(2+) as a cofactor.

It carries out the reaction 5-methyltetrahydropteroyltri-L-glutamate + L-homocysteine = tetrahydropteroyltri-L-glutamate + L-methionine. The protein operates within amino-acid biosynthesis; L-methionine biosynthesis via de novo pathway; L-methionine from L-homocysteine (MetE route): step 1/1. Functionally, catalyzes the transfer of a methyl group from 5-methyltetrahydrofolate to homocysteine resulting in methionine formation. This chain is 5-methyltetrahydropteroyltriglutamate--homocysteine methyltransferase, found in Lactococcus lactis subsp. cremoris (strain MG1363).